Here is a 225-residue protein sequence, read N- to C-terminus: UPF0758 protein SZO_09140 (225 aa).

The 123-residue stretch at 102-224 (PVLSSAQVAE…YYSFREKSDL (123 aa)) folds into the MPN domain. The Zn(2+) site is built by His173, His175, and Asp186. Residues 173 to 186 (HNHPSGLTKPSAND) carry the JAMM motif motif.

The protein belongs to the UPF0758 family.

The polypeptide is UPF0758 protein SZO_09140 (Streptococcus equi subsp. zooepidemicus (strain H70)).